A 580-amino-acid polypeptide reads, in one-letter code: Amino-acid acetyltransferase, mitochondrial (580 aa).

The 158-residue stretch at 403 to 560 folds into the N-acetyltransferase domain; sequence LTMQNLFDDK…NPRHKNGVVN (158 aa).

It belongs to the acetyltransferase family.

Its subcellular location is the mitochondrion. The catalysed reaction is L-glutamate + acetyl-CoA = N-acetyl-L-glutamate + CoA + H(+). The protein operates within amino-acid biosynthesis; L-arginine biosynthesis; N(2)-acetyl-L-ornithine from L-glutamate: step 1/4. Its function is as follows. N-acetylglutamate synthase involved in arginine biosynthesis. The protein is Amino-acid acetyltransferase, mitochondrial (ARG2) of Candida dubliniensis (strain CD36 / ATCC MYA-646 / CBS 7987 / NCPF 3949 / NRRL Y-17841) (Yeast).